Reading from the N-terminus, the 704-residue chain is Elongation factor G (704 aa).

Positions 8-291 (DRVRNIGIMA…AVIEYLASPV (284 aa)) constitute a tr-type G domain. GTP is bound by residues 17 to 24 (AHIDAGKT), 90 to 94 (DTPGH), and 144 to 147 (NKMD).

The protein belongs to the TRAFAC class translation factor GTPase superfamily. Classic translation factor GTPase family. EF-G/EF-2 subfamily.

It is found in the cytoplasm. In terms of biological role, catalyzes the GTP-dependent ribosomal translocation step during translation elongation. During this step, the ribosome changes from the pre-translocational (PRE) to the post-translocational (POST) state as the newly formed A-site-bound peptidyl-tRNA and P-site-bound deacylated tRNA move to the P and E sites, respectively. Catalyzes the coordinated movement of the two tRNA molecules, the mRNA and conformational changes in the ribosome. This chain is Elongation factor G, found in Chlorobium chlorochromatii (strain CaD3).